Here is a 182-residue protein sequence, read N- to C-terminus: Putative manganese efflux pump MntP (182 aa).

A run of 6 helical transmembrane segments spans residues 6–26, 37–57, 72–92, 101–121, 131–151, and 162–182; these read LIPLIIMAFALGMDAFSVSLG, ILYIGMTIGIFHIIMPFIGMV, FAGAILLIGLGFYIVYSSILE, IGISLFVFAFGVSIDSFSVGL, IITILLFGLISMLLAWMGLLL, and YGEIVGGIILVGFGLYLLFPI.

The protein belongs to the MntP (TC 9.B.29) family.

Its subcellular location is the cell membrane. In terms of biological role, probably functions as a manganese efflux pump. The protein is Putative manganese efflux pump MntP of Bacillus mycoides (strain KBAB4) (Bacillus weihenstephanensis).